Here is a 534-residue protein sequence, read N- to C-terminus: 2,3-bisphosphoglycerate-independent phosphoglycerate mutase (534 aa).

2 residues coordinate Mn(2+): D15 and S65. The active-site Phosphoserine intermediate is S65. Substrate is bound by residues H126, 156–157 (RD), R188, R194, 261–264 (RPDR), and K334. Residues D401, H405, D442, H443, and H460 each contribute to the Mn(2+) site.

It belongs to the BPG-independent phosphoglycerate mutase family. Requires Mn(2+) as cofactor.

Its subcellular location is the plastid. The protein localises to the chloroplast. It catalyses the reaction (2R)-2-phosphoglycerate = (2R)-3-phosphoglycerate. The protein operates within carbohydrate degradation; glycolysis; pyruvate from D-glyceraldehyde 3-phosphate: step 3/5. Its function is as follows. Catalyzes the interconversion of 2-phosphoglycerate and 3-phosphoglycerate. The sequence is that of 2,3-bisphosphoglycerate-independent phosphoglycerate mutase from Pyropia yezoensis (Susabi-nori).